The following is a 405-amino-acid chain: Acetate kinase (405 aa).

Residue N7 coordinates Mg(2+). ATP is bound at residue K14. Substrate is bound at residue R98. The active-site Proton donor/acceptor is the D155. ATP-binding positions include 215 to 219 (HLGNG), 289 to 291 (DMR), and 337 to 341 (GIGEN). Mg(2+) is bound at residue E391.

The protein belongs to the acetokinase family. In terms of assembly, homodimer. Requires Mg(2+) as cofactor. Mn(2+) is required as a cofactor.

It is found in the cytoplasm. It carries out the reaction acetate + ATP = acetyl phosphate + ADP. It functions in the pathway metabolic intermediate biosynthesis; acetyl-CoA biosynthesis; acetyl-CoA from acetate: step 1/2. In terms of biological role, catalyzes the formation of acetyl phosphate from acetate and ATP. Can also catalyze the reverse reaction. The polypeptide is Acetate kinase (Desulfotalea psychrophila (strain LSv54 / DSM 12343)).